The chain runs to 1006 residues: DNA polymerase (1006 aa).

This sequence belongs to the DNA polymerase type-B family. In terms of assembly, interacts with OPG148. Component of the Uracil-DNA glycosylase(UDG)-OPG148-polymerase complex; OPG148 and OPG116/UDG form a heterodimeric processivity factor that associates with OPG071 to form the processive polymerase holoenzyme.

It catalyses the reaction DNA(n) + a 2'-deoxyribonucleoside 5'-triphosphate = DNA(n+1) + diphosphate. In terms of biological role, catalyzes DNA synthesis. Acquires processivity by associating with a heterodimeric processivity factor comprised of the viral OPG148 and OPG116 proteins, thereby forming the DNA polymerase holoenzyme. Displays 3'- to 5' exonuclease activity. Might participate in viral DNA recombination. Does not perform OPG116/D4synthesis across an abasic site. This chain is DNA polymerase (OPG071), found in Monkeypox virus.